The primary structure comprises 207 residues: Ribosomal RNA large subunit methyltransferase E (207 aa).

S-adenosyl-L-methionine is bound by residues glycine 60, tryptophan 62, aspartate 80, aspartate 96, and aspartate 121. The active-site Proton acceptor is lysine 161.

The protein belongs to the class I-like SAM-binding methyltransferase superfamily. RNA methyltransferase RlmE family.

It localises to the cytoplasm. The enzyme catalyses uridine(2552) in 23S rRNA + S-adenosyl-L-methionine = 2'-O-methyluridine(2552) in 23S rRNA + S-adenosyl-L-homocysteine + H(+). Specifically methylates the uridine in position 2552 of 23S rRNA at the 2'-O position of the ribose in the fully assembled 50S ribosomal subunit. The polypeptide is Ribosomal RNA large subunit methyltransferase E (Pseudomonas paraeruginosa (strain DSM 24068 / PA7) (Pseudomonas aeruginosa (strain PA7))).